Consider the following 217-residue polypeptide: Glutathione S-transferase B (217 aa).

The region spanning 1 to 87 (PMTLGYWNIR…YIARKHNLCG (87 aa)) is the GST N-terminal domain. Glutathione contacts are provided by residues 6 to 7 (YW), 45 to 49 (WLNEK), 58 to 59 (NL), and 71 to 72 (QS). Positions 89 to 207 (TEEETIRMDI…KSSRFLPKPL (119 aa)) constitute a GST C-terminal domain. Y115 is a binding site for substrate.

Belongs to the GST superfamily. Mu family. Homodimer.

The protein localises to the cytoplasm. It carries out the reaction RX + glutathione = an S-substituted glutathione + a halide anion + H(+). It catalyses the reaction prostaglandin A2 + glutathione = prostaglandin A2-S-(R)-glutathione. The enzyme catalyses prostaglandin J2 + glutathione = prostaglandin J2-S-(R)-glutathione. The catalysed reaction is prostaglandin J2 + glutathione = prostaglandin J2-S-(S)-glutathione. It carries out the reaction prostaglandin A2 + glutathione = prostaglandin A2-S-(S)-glutathione. It catalyses the reaction 11(S)-hydroxy-14(S),15(S)-epoxy-(5Z,8Z,12E)-eicosatrienoate + glutathione = (11S,15S)-dihydroxy-14(R)-S-glutathionyl-(5Z,8Z,12E)-eicosatrienoate. In terms of biological role, conjugation of reduced glutathione to a wide number of exogenous and endogenous hydrophobic electrophiles. Involved in the formation of glutathione conjugates of both prostaglandin A2 (PGA2) and prostaglandin J2 (PGJ2). Participates in the formation of novel hepoxilin regioisomers. This Cavia porcellus (Guinea pig) protein is Glutathione S-transferase B (GSTM1).